A 1299-amino-acid polypeptide reads, in one-letter code: Sophorolipid transporter (1299 aa).

The Cytoplasmic segment spans residues 1-64; that stretch reads MVDDIQVEKR…FCTPLDVFLE (64 aa). A helical membrane pass occupies residues 65 to 85; sequence ILALFFAAVHGAALPMFTLVV. One can recognise an ABC transmembrane type-1 1 domain in the interval 65–356; the sequence is ILALFFAAVH…IAPNVRFLVK (292 aa). Residues 86–114 lie on the Extracellular side of the membrane; that stretch reads GAIFNTFRDFTSYDLKGNEFQHKVNHLSL. A helical transmembrane segment spans residues 115–135; the sequence is YFVYIGIGMLGSAFLESFLLV. Over 136-187 the chain is Cytoplasmic; that stretch reads DRGEVLAGRYRKHYLSAVIRQNIAFYDKLGGGEVSTRIINDTNSIQEAISDK. The helical transmembrane segment at 188 to 208 threads the bilayer; the sequence is LGNVVQGIASFIAATVISFAS. Over 209–214 the chain is Extracellular; it reads QWKLAC. The helical transmembrane segment at 215-235 threads the bilayer; sequence ILLSAVGFMVITMGTGATFMA. Residues 236 to 293 lie on the Cytoplasmic side of the membrane; that stretch reads KYQLRSDAIYSQSGATVAEEALSAVRTTVAFGAQPHLAVKYEKVLDRVVKESKRSSYS. Residues 294–314 traverse the membrane as a helical segment; it reads LGVMLACIWASTFWVYALALW. Residues 315 to 326 are Extracellular-facing; the sequence is QGSREIVSGSAD. A helical membrane pass occupies residues 327 to 347; the sequence is VGKIIVVITAMLLGSFQLGNI. At 348–725 the chain is on the cytoplasmic side; it reads APNVRFLVKG…WGLNRKEWGY (378 aa). The region spanning 393 to 638 is the ABC transporter 1 domain; that stretch reads IELKNVKFRY…EGPYKALVDA (246 aa). 428–435 is an ATP binding site; it reads GASGSGKS. Residues 681–690 are compositionally biased toward polar residues; the sequence is SAGTQTTQPP. The interval 681–703 is disordered; sequence SAGTQTTQPPEYQENDIPGVRNP. The helical transmembrane segment at 726-746 threads the bilayer; sequence ILIGSLASIILGYCYPAMAII. Residues 727–1016 enclose the ABC transmembrane type-1 2 domain; sequence LIGSLASIIL…IFSYAPNMNS (290 aa). Residues 747–769 lie on the Extracellular side of the membrane; that stretch reads TGQTTGSMVLPPSEYGKMRHVVN. The helical transmembrane segment at 770–790 threads the bilayer; sequence IMGWWYFFVGCISFMTAFITI. Residues 791–848 lie on the Cytoplasmic side of the membrane; sequence AALSLASDKLVKNIRLALFRQLMRMDIAFFDHKNNTPGALTSILAKEAKMIEGLSGAT. A helical transmembrane segment spans residues 849–869; sequence LGQIQQSLVTLIGGIVTGIPF. Residues 870-874 lie on the Extracellular side of the membrane; the sequence is NWRIG. A helical transmembrane segment spans residues 875–895; sequence LVATSVVPVMLVCGFVRVWVL. The Cytoplasmic portion of the chain corresponds to 896–954; that stretch reads TQLSDRAREVYERSGSMASEYTSAVRTVQSLTRELDVVVKYTKTVDSQIFSSRIAIARS. Residues 955 to 975 traverse the membrane as a helical segment; sequence ALYYALSEGMTPWVVALVFWW. At 976–987 the chain is on the extracellular side; it reads GSTVMRRGEASV. The helical transmembrane segment at 988–1008 threads the bilayer; the sequence is AGYMTVFMAIITGSQAAGQIF. The Cytoplasmic portion of the chain corresponds to 1009-1299; the sequence is SYAPNMNSAK…LVNLQGLGEI (291 aa). The region spanning 1053-1293 is the ABC transporter 2 domain; the sequence is IEFRHVNFRY…NGWYAELVNL (241 aa). Residue 1088–1095 coordinates ATP; it reads GASGCGKS.

It belongs to the ABC transporter superfamily. ABCB family. Multidrug resistance exporter (TC 3.A.1.201) subfamily.

Its subcellular location is the cell membrane. Functionally, transports acidic acylated and non-acylated sophorolipids (SLs) into the extracellular space, where they can be lactonized by lactone esterase. The sequence is that of Sophorolipid transporter (mdr) from Starmerella bombicola (Yeast).